The primary structure comprises 343 residues: Methionine import ATP-binding protein MetN 1 (343 aa).

Positions 2-241 constitute an ABC transporter domain; that stretch reads IKLSNITKVF…PKTPLAQKFI (240 aa). 38-45 is an ATP binding site; sequence GASGAGKS.

This sequence belongs to the ABC transporter superfamily. Methionine importer (TC 3.A.1.24) family. As to quaternary structure, the complex is composed of two ATP-binding proteins (MetN), two transmembrane proteins (MetI) and a solute-binding protein (MetQ).

It is found in the cell inner membrane. The catalysed reaction is L-methionine(out) + ATP + H2O = L-methionine(in) + ADP + phosphate + H(+). It catalyses the reaction D-methionine(out) + ATP + H2O = D-methionine(in) + ADP + phosphate + H(+). In terms of biological role, part of the ABC transporter complex MetNIQ involved in methionine import. Responsible for energy coupling to the transport system. In Salmonella choleraesuis (strain SC-B67), this protein is Methionine import ATP-binding protein MetN 1.